Here is a 95-residue protein sequence, read N- to C-terminus: Small ribosomal subunit protein uS19 (95 aa).

The segment at alanine 75 to lysine 95 is disordered. A compositionally biased stretch (basic residues) spans phenylalanine 80 to lysine 95.

Belongs to the universal ribosomal protein uS19 family.

Protein S19 forms a complex with S13 that binds strongly to the 16S ribosomal RNA. This chain is Small ribosomal subunit protein uS19, found in Roseiflexus sp. (strain RS-1).